The primary structure comprises 229 residues: Ribonuclease HII (229 aa).

The region spanning 34–223 (WPVAGADEAG…LRKVEDGPQM (190 aa)) is the RNase H type-2 domain. Asp40, Glu41, and Asp131 together coordinate a divalent metal cation.

This sequence belongs to the RNase HII family. Mn(2+) serves as cofactor. Mg(2+) is required as a cofactor.

The protein localises to the cytoplasm. It carries out the reaction Endonucleolytic cleavage to 5'-phosphomonoester.. Endonuclease that specifically degrades the RNA of RNA-DNA hybrids. This chain is Ribonuclease HII, found in Rhizobium leguminosarum bv. trifolii (strain WSM2304).